We begin with the raw amino-acid sequence, 59 residues long: Protein translocase subunit SecE (59 aa).

A helical transmembrane segment spans residues 37–57; sequence GIGIIIIGVIGFIISIIAQLL.

It belongs to the SecE/SEC61-gamma family. Component of the Sec protein translocase complex. Heterotrimer consisting of SecY (alpha), SecG (beta) and SecE (gamma) subunits. The heterotrimers can form oligomers, although 1 heterotrimer is thought to be able to translocate proteins. Interacts with the ribosome. May interact with SecDF, and other proteins may be involved.

The protein resides in the cell membrane. Functionally, essential subunit of the Sec protein translocation channel SecYEG. Clamps together the 2 halves of SecY. May contact the channel plug during translocation. The polypeptide is Protein translocase subunit SecE (Methanothermobacter thermautotrophicus (strain ATCC 29096 / DSM 1053 / JCM 10044 / NBRC 100330 / Delta H) (Methanobacterium thermoautotrophicum)).